The sequence spans 355 residues: 3-dehydroquinate synthase (355 aa).

NAD(+) contacts are provided by residues 71-76 (EGEERK), 105-109 (GVVGD), 129-130 (TS), Lys142, and Lys151. Zn(2+) contacts are provided by Glu184, His246, and His263.

The protein belongs to the sugar phosphate cyclases superfamily. Dehydroquinate synthase family. It depends on Co(2+) as a cofactor. The cofactor is Zn(2+). Requires NAD(+) as cofactor.

It localises to the cytoplasm. The catalysed reaction is 7-phospho-2-dehydro-3-deoxy-D-arabino-heptonate = 3-dehydroquinate + phosphate. It functions in the pathway metabolic intermediate biosynthesis; chorismate biosynthesis; chorismate from D-erythrose 4-phosphate and phosphoenolpyruvate: step 2/7. Functionally, catalyzes the conversion of 3-deoxy-D-arabino-heptulosonate 7-phosphate (DAHP) to dehydroquinate (DHQ). In Streptococcus pneumoniae (strain 70585), this protein is 3-dehydroquinate synthase.